The primary structure comprises 236 residues: Small ribosomal subunit protein uS2c (236 aa).

It belongs to the universal ribosomal protein uS2 family.

It is found in the plastid. The protein localises to the chloroplast. This chain is Small ribosomal subunit protein uS2c (rps2), found in Oryza nivara (Indian wild rice).